Reading from the N-terminus, the 264-residue chain is Tryptophan synthase alpha chain (264 aa).

Residues Glu-49 and Asp-60 each act as proton acceptor in the active site.

The protein belongs to the TrpA family. As to quaternary structure, tetramer of two alpha and two beta chains.

It catalyses the reaction (1S,2R)-1-C-(indol-3-yl)glycerol 3-phosphate + L-serine = D-glyceraldehyde 3-phosphate + L-tryptophan + H2O. It participates in amino-acid biosynthesis; L-tryptophan biosynthesis; L-tryptophan from chorismate: step 5/5. Its function is as follows. The alpha subunit is responsible for the aldol cleavage of indoleglycerol phosphate to indole and glyceraldehyde 3-phosphate. This chain is Tryptophan synthase alpha chain, found in Microcystis aeruginosa (strain NIES-843 / IAM M-2473).